Here is a 427-residue protein sequence, read N- to C-terminus: Peptidase B (427 aa).

Residues K195 and D200 each coordinate Mn(2+). K207 is an active-site residue. D218, D277, and E279 together coordinate Mn(2+). R281 is a catalytic residue.

The protein belongs to the peptidase M17 family. As to quaternary structure, homohexamer. The cofactor is Mn(2+).

Its subcellular location is the cytoplasm. The catalysed reaction is Release of an N-terminal amino acid, Xaa, from a peptide or arylamide. Xaa is preferably Glu or Asp but may be other amino acids, including Leu, Met, His, Cys and Gln.. Functionally, probably plays an important role in intracellular peptide degradation. The polypeptide is Peptidase B (Escherichia coli O127:H6 (strain E2348/69 / EPEC)).